The sequence spans 495 residues: F(420)H(2) dehydrogenase subunit M (495 aa).

15 helical membrane passes run 1 to 21 (MLPVASLLILVPLIFAVVTFF), 27 to 47 (LAAGFGFLGSLATLGLTLYAY), 57 to 77 (MQFYESVSWIPFLGVNYSVGI), 80 to 100 (VSMPLILLNAIVIPFMILFTW), 108 to 128 (NRFYGLILTMQAAVIGVFVAL), 130 to 150 (FVVFYIFWELTLVPLFFIVNL), 163 to 183 (FFIYTHVASLVMLLGIFGLFY), 215 to 235 (IFLAILFGFLAKLPAFPFHSW), 249 to 269 (ILFILLKIGGYGLFRISLPML), 277 to 297 (LMIMILGLLGSVSILYGALLA), 315 to 335 (MGYVILGSAGLVTLSVSGAMF), 338 to 358 (FSHGLIMSIMFMSAGAIQTAA), 378 to 398 (VAMMVGFMASLGLPGLTGFIA), 412 to 432 (VFVVIALLAIVVTAGYHLWAM), and 450 to 470 (INSIQVFSMAVIALLVLYFGL).

Belongs to the complex I subunit 4 family. The FPO complex is composed of at least 13 different subunits. FpoA, FpoH, FpoJ, FpoK, FpoL, FpoM and FpoN proteins constitute the membrane sector of the complex.

The protein resides in the cell membrane. The enzyme catalyses methanophenazine + reduced coenzyme F420-(gamma-L-Glu)(n) = dihydromethanophenazine + oxidized coenzyme F420-(gamma-L-Glu)(n) + H(+). Component of the F(420)H(2) dehydrogenase (FPO complex) which is part of the energy-conserving F(420)H(2):heterodisulfide oxidoreductase system. The membrane-bound electron transfer system of the complex plays an important role in the metabolism of methylotrophic methanogens when the organisms grow on methanol or methylamines. Catalyzes the oxidation of methanophenazine to dihydromethanophenazine. It shuttles electrons from F(420)H(2), via FAD and iron-sulfur (Fe-S) centers, to methanophenazine (an electron carrier in the membrane). It couples the redox reaction to proton translocation (for every two electrons transferred, two hydrogen ions are translocated across the cytoplasmic membrane), and thus conserves the redox energy in a proton gradient. It also catalyzes the oxidation of F(420)H(2) with quinones such as 2,3-dimethyl-1,4-naphthoquinone, 2-methyl-1,4-naphthoquinone and tetramethyl-p-benzoquinone. The protein is F(420)H(2) dehydrogenase subunit M (fpoM) of Methanosarcina mazei (strain ATCC BAA-159 / DSM 3647 / Goe1 / Go1 / JCM 11833 / OCM 88) (Methanosarcina frisia).